We begin with the raw amino-acid sequence, 739 residues long: Eukaryotic translation initiation factor 3 subunit B (739 aa).

Residues 39 to 125 enclose the RRM domain; it reads AFVVIDGLPV…HTLAVNKLTD (87 aa). WD repeat units follow at residues 191-229, 231-288, 457-498, 516-559, and 574-612; these read RDHW…KQKQ, PHPF…RSFV, SLKD…SFFA, IEKK…EKPE, and NEHF…HTFS.

This sequence belongs to the eIF-3 subunit B family. As to quaternary structure, component of the eukaryotic translation initiation factor 3 (eIF-3) complex.

It localises to the cytoplasm. RNA-binding component of the eukaryotic translation initiation factor 3 (eIF-3) complex, which is involved in protein synthesis of a specialized repertoire of mRNAs and, together with other initiation factors, stimulates binding of mRNA and methionyl-tRNAi to the 40S ribosome. The eIF-3 complex specifically targets and initiates translation of a subset of mRNAs involved in cell proliferation. This chain is Eukaryotic translation initiation factor 3 subunit B, found in Coccidioides immitis (strain RS) (Valley fever fungus).